We begin with the raw amino-acid sequence, 346 residues long: tRNA N6-adenosine threonylcarbamoyltransferase (346 aa).

Residues His111 and His115 each contribute to the Fe cation site. Residues 134–138 (LVSGG), Asp167, Gly180, and Asn279 contribute to the substrate site. Asp307 lines the Fe cation pocket.

This sequence belongs to the KAE1 / TsaD family. Fe(2+) serves as cofactor.

It localises to the cytoplasm. It carries out the reaction L-threonylcarbamoyladenylate + adenosine(37) in tRNA = N(6)-L-threonylcarbamoyladenosine(37) in tRNA + AMP + H(+). Functionally, required for the formation of a threonylcarbamoyl group on adenosine at position 37 (t(6)A37) in tRNAs that read codons beginning with adenine. Is involved in the transfer of the threonylcarbamoyl moiety of threonylcarbamoyl-AMP (TC-AMP) to the N6 group of A37, together with TsaE and TsaB. TsaD likely plays a direct catalytic role in this reaction. This Burkholderia pseudomallei (strain K96243) protein is tRNA N6-adenosine threonylcarbamoyltransferase.